The chain runs to 380 residues: Lipid-A-disaccharide synthase (380 aa).

The protein belongs to the LpxB family.

The enzyme catalyses a lipid X + a UDP-2-N,3-O-bis[(3R)-3-hydroxyacyl]-alpha-D-glucosamine = a lipid A disaccharide + UDP + H(+). It functions in the pathway bacterial outer membrane biogenesis; LPS lipid A biosynthesis. Its function is as follows. Condensation of UDP-2,3-diacylglucosamine and 2,3-diacylglucosamine-1-phosphate to form lipid A disaccharide, a precursor of lipid A, a phosphorylated glycolipid that anchors the lipopolysaccharide to the outer membrane of the cell. The sequence is that of Lipid-A-disaccharide synthase from Photobacterium profundum (strain SS9).